Here is a 213-residue protein sequence, read N- to C-terminus: Pyridoxine/pyridoxamine 5'-phosphate oxidase (213 aa).

Substrate is bound by residues 8-11 (RQEY) and lysine 66. FMN contacts are provided by residues 61 to 66 (RTVLLK), 76 to 77 (YT), arginine 82, lysine 83, and glutamine 105. The substrate site is built by tyrosine 123, arginine 127, and serine 131. FMN contacts are provided by residues 140 to 141 (QS) and tryptophan 185. 191 to 193 (RLH) serves as a coordination point for substrate. Position 195 (arginine 195) interacts with FMN.

The protein belongs to the pyridoxamine 5'-phosphate oxidase family. In terms of assembly, homodimer. FMN is required as a cofactor.

The enzyme catalyses pyridoxamine 5'-phosphate + O2 + H2O = pyridoxal 5'-phosphate + H2O2 + NH4(+). It carries out the reaction pyridoxine 5'-phosphate + O2 = pyridoxal 5'-phosphate + H2O2. Its pathway is cofactor metabolism; pyridoxal 5'-phosphate salvage; pyridoxal 5'-phosphate from pyridoxamine 5'-phosphate: step 1/1. It functions in the pathway cofactor metabolism; pyridoxal 5'-phosphate salvage; pyridoxal 5'-phosphate from pyridoxine 5'-phosphate: step 1/1. Catalyzes the oxidation of either pyridoxine 5'-phosphate (PNP) or pyridoxamine 5'-phosphate (PMP) into pyridoxal 5'-phosphate (PLP). The polypeptide is Pyridoxine/pyridoxamine 5'-phosphate oxidase (Bacteroides thetaiotaomicron (strain ATCC 29148 / DSM 2079 / JCM 5827 / CCUG 10774 / NCTC 10582 / VPI-5482 / E50)).